The sequence spans 320 residues: Dual oxidase maturation factor 2 (320 aa).

Residues 22 to 42 (VPLLIVILVFLSLAASFLFIL) form a helical membrane-spanning segment. Over 43–51 (PGIRGHSRW) the chain is Cytoplasmic. A helical transmembrane segment spans residues 52–72 (FWLVRVLLSLFIGAEIVAVHF). Residues 73-183 (SGDWFVGRVW…HLAGHYAAAT (111 aa)) are Extracellular-facing. N-linked (GlcNAc...) asparagine glycans are attached at residues asparagine 84, asparagine 109, and asparagine 121. A helical transmembrane segment spans residues 184–204 (LWVAFCFWIIANALLSMPAPL). Residues 205–206 (YG) are Cytoplasmic-facing. The helical transmembrane segment at 207–227 (GLALLTTGAFTLFGVFAFASI) threads the bilayer. Residues 228 to 249 (SSVPLCHFRLGSAVLTPYYGAS) are Extracellular-facing. Residues 250 to 270 (FWLTLATGILSLLLGGAVVIL) form a helical membrane-spanning segment. Topologically, residues 271-320 (HYTRPSALRSFLDLSVKDCSNQAKGNSPLTLNNPQHEQLKSPDLNITTLL) are cytoplasmic.

The protein belongs to the DUOXA family. Heterodimer with DUXA2; disulfide-linked. Interacts with CSNK1G2. Post-translationally, N-glycosylated.

It is found in the endoplasmic reticulum membrane. Its function is as follows. Required for the maturation and the transport from the endoplasmic reticulum to the plasma membrane of functional DUOX2. May play a role in thyroid hormone synthesis. This is Dual oxidase maturation factor 2 (Duoxa2) from Mus musculus (Mouse).